We begin with the raw amino-acid sequence, 406 residues long: Putative 12-oxophytodienoate reductase 12 (406 aa).

FMN is bound by residues 41 to 43, A74, and Q119; that span reads PLT. 188-191 contacts substrate; the sequence is HAAN. FMN contacts are provided by residues R240, G317, and 338–339; that span reads GR.

It belongs to the NADH:flavin oxidoreductase/NADH oxidase family. The cofactor is FMN.

In terms of biological role, putative oxophytodienoate reductase that may be involved in the biosynthesis or metabolism of oxylipin signaling molecules. This chain is Putative 12-oxophytodienoate reductase 12 (OPR12), found in Oryza sativa subsp. japonica (Rice).